A 176-amino-acid chain; its full sequence is Jacalin-related lectin 19 (176 aa).

A Jacalin-type lectin domain is found at 12–154 (TVFVGPWGGN…LDSIGFHLSR (143 aa)).

The protein belongs to the jacalin lectin family.

This chain is Jacalin-related lectin 19 (JAL19), found in Arabidopsis thaliana (Mouse-ear cress).